Reading from the N-terminus, the 345-residue chain is N-acetyl-gamma-glutamyl-phosphate reductase (345 aa).

C149 is a catalytic residue.

The protein belongs to the NAGSA dehydrogenase family. Type 1 subfamily.

It localises to the cytoplasm. The catalysed reaction is N-acetyl-L-glutamate 5-semialdehyde + phosphate + NADP(+) = N-acetyl-L-glutamyl 5-phosphate + NADPH + H(+). It participates in amino-acid biosynthesis; L-arginine biosynthesis; N(2)-acetyl-L-ornithine from L-glutamate: step 3/4. Its function is as follows. Catalyzes the NADPH-dependent reduction of N-acetyl-5-glutamyl phosphate to yield N-acetyl-L-glutamate 5-semialdehyde. The polypeptide is N-acetyl-gamma-glutamyl-phosphate reductase (Desulforapulum autotrophicum (strain ATCC 43914 / DSM 3382 / VKM B-1955 / HRM2) (Desulfobacterium autotrophicum)).